The following is a 902-amino-acid chain: AAA+ ATPase ClpV1 (902 aa).

One can recognise a Clp R domain in the interval 10–151 (FGKLNSLAYK…KVEALTERFD (142 aa)). Repeat stretches follow at residues 13-78 (LNSL…LDRL) and 88-151 (LSSH…ERFD). Residue 237–244 (GEAGVGKT) participates in ATP binding. The stretch at 441–559 (AEVDDSRRRI…AQLSALQGEE (119 aa)) forms a coiled coil. Position 640–647 (640–647 (GTSGVGKT)) interacts with ATP.

The protein belongs to the ClpA/ClpB family. In terms of assembly, interacts with TagJ.

The protein localises to the cytoplasm. Functionally, component of the H1 type VI (H1-T6SS) secretion system that plays a role in the release of toxins targeting both eukaryotic and prokaryotic species. Acts as an AAA(+) ATPase that disassembles the contracted sheath, which resets the systems for reassembly of an extended sheath that is ready to fire again. This is AAA+ ATPase ClpV1 (clpV1) from Pseudomonas aeruginosa (strain ATCC 15692 / DSM 22644 / CIP 104116 / JCM 14847 / LMG 12228 / 1C / PRS 101 / PAO1).